We begin with the raw amino-acid sequence, 435 residues long: Serine--tRNA ligase (435 aa).

Residue 233–235 participates in L-serine binding; it reads TAE. Residue 264 to 266 coordinates ATP; that stretch reads RAE. Glu287 contacts L-serine. 351–354 is an ATP binding site; the sequence is EISS. Ser386 contributes to the L-serine binding site.

The protein belongs to the class-II aminoacyl-tRNA synthetase family. Type-1 seryl-tRNA synthetase subfamily. As to quaternary structure, homodimer. The tRNA molecule binds across the dimer.

The protein resides in the cytoplasm. It catalyses the reaction tRNA(Ser) + L-serine + ATP = L-seryl-tRNA(Ser) + AMP + diphosphate + H(+). The enzyme catalyses tRNA(Sec) + L-serine + ATP = L-seryl-tRNA(Sec) + AMP + diphosphate + H(+). It functions in the pathway aminoacyl-tRNA biosynthesis; selenocysteinyl-tRNA(Sec) biosynthesis; L-seryl-tRNA(Sec) from L-serine and tRNA(Sec): step 1/1. In terms of biological role, catalyzes the attachment of serine to tRNA(Ser). Is also able to aminoacylate tRNA(Sec) with serine, to form the misacylated tRNA L-seryl-tRNA(Sec), which will be further converted into selenocysteinyl-tRNA(Sec). The chain is Serine--tRNA ligase from Anaeromyxobacter dehalogenans (strain 2CP-C).